Reading from the N-terminus, the 240-residue chain is Pyridoxine 5'-phosphate synthase (240 aa).

Residue Asn7 participates in 3-amino-2-oxopropyl phosphate binding. 9–10 (DH) contributes to the 1-deoxy-D-xylulose 5-phosphate binding site. Residue Arg18 participates in 3-amino-2-oxopropyl phosphate binding. His43 functions as the Proton acceptor in the catalytic mechanism. Residues Arg45 and His50 each contribute to the 1-deoxy-D-xylulose 5-phosphate site. Catalysis depends on Glu70, which acts as the Proton acceptor. Thr100 serves as a coordination point for 1-deoxy-D-xylulose 5-phosphate. The Proton donor role is filled by His191. 3-amino-2-oxopropyl phosphate-binding positions include Gly192 and 213 to 214 (GH).

Belongs to the PNP synthase family. Homooctamer; tetramer of dimers.

The protein resides in the cytoplasm. It carries out the reaction 3-amino-2-oxopropyl phosphate + 1-deoxy-D-xylulose 5-phosphate = pyridoxine 5'-phosphate + phosphate + 2 H2O + H(+). It participates in cofactor biosynthesis; pyridoxine 5'-phosphate biosynthesis; pyridoxine 5'-phosphate from D-erythrose 4-phosphate: step 5/5. In terms of biological role, catalyzes the complicated ring closure reaction between the two acyclic compounds 1-deoxy-D-xylulose-5-phosphate (DXP) and 3-amino-2-oxopropyl phosphate (1-amino-acetone-3-phosphate or AAP) to form pyridoxine 5'-phosphate (PNP) and inorganic phosphate. The sequence is that of Pyridoxine 5'-phosphate synthase from Coxiella burnetii (strain Dugway 5J108-111).